The chain runs to 378 residues: Ecotin-like protein 3 (378 aa).

Disordered stretches follow at residues 191–216 and 238–378; these read HRLSSSTPPLIPSAVRGSAHEAHAAP and PQNN…KADP. Over residues 274 to 287 the composition is skewed to polar residues; the sequence is NEPSPSRPRLSSTE. The span at 337-348 shows a compositional bias: basic and acidic residues; the sequence is RKAEDNVYEKTM. Low complexity predominate over residues 362–378; sequence KASASSKKSGNGSKADP.

This sequence belongs to the protease inhibitor I11 (ecotin) family.

This chain is Ecotin-like protein 3, found in Leishmania infantum.